The following is a 210-amino-acid chain: ATP-dependent Clp protease proteolytic subunit (210 aa).

S106 serves as the catalytic Nucleophile. H131 is a catalytic residue.

It belongs to the peptidase S14 family. Fourteen ClpP subunits assemble into 2 heptameric rings which stack back to back to give a disk-like structure with a central cavity, resembling the structure of eukaryotic proteasomes.

The protein resides in the cytoplasm. It catalyses the reaction Hydrolysis of proteins to small peptides in the presence of ATP and magnesium. alpha-casein is the usual test substrate. In the absence of ATP, only oligopeptides shorter than five residues are hydrolyzed (such as succinyl-Leu-Tyr-|-NHMec, and Leu-Tyr-Leu-|-Tyr-Trp, in which cleavage of the -Tyr-|-Leu- and -Tyr-|-Trp bonds also occurs).. Its function is as follows. Cleaves peptides in various proteins in a process that requires ATP hydrolysis. Has a chymotrypsin-like activity. Plays a major role in the degradation of misfolded proteins. The polypeptide is ATP-dependent Clp protease proteolytic subunit (Bradyrhizobium sp. (strain BTAi1 / ATCC BAA-1182)).